Consider the following 159-residue polypeptide: Eukaryotic translation initiation factor 5A (159 aa).

Basic and acidic residues predominate over residues 1-12; the sequence is MSDEEHQFESKA. Positions 1–23 are disordered; that stretch reads MSDEEHQFESKADAGASKTYPQQ. Lys-52 is modified (hypusine).

It belongs to the eIF-5A family. In terms of processing, lys-52 undergoes hypusination, a unique post-translational modification that consists in the addition of a butylamino group from spermidine to lysine side chain, leading to the formation of the unusual amino acid hypusine. eIF-5As are the only known proteins to undergo this modification, which is essential for their function.

Translation factor that promotes translation elongation and termination, particularly upon ribosome stalling at specific amino acid sequence contexts. Binds between the exit (E) and peptidyl (P) site of the ribosome and promotes rescue of stalled ribosome: specifically required for efficient translation of polyproline-containing peptides as well as other motifs that stall the ribosome. Acts as a ribosome quality control (RQC) cofactor by joining the RQC complex to facilitate peptidyl transfer during CAT tailing step. The chain is Eukaryotic translation initiation factor 5A (EIFSV1) from Senecio vernalis (Spring groundsel).